The primary structure comprises 373 residues: Innexin shaking-B (373 aa).

Topologically, residues M1–S21 are cytoplasmic. A helical transmembrane segment spans residues P22–V42. Over T43–K106 the chain is Extracellular. The chain crosses the membrane as a helical span at residues I107 to T127. At P128–N176 the chain is on the cytoplasmic side. Residues W177 to L199 form a helical membrane-spanning segment. The Extracellular segment spans residues M200–K268. The chain crosses the membrane as a helical span at residues I269–F289. The Cytoplasmic portion of the chain corresponds to Y290 to A373.

The protein belongs to the pannexin family. In terms of assembly, monomer.

The protein resides in the cell membrane. It is found in the cell junction. Its subcellular location is the gap junction. Its function is as follows. Structural component of the gap junctions at electrical synapses in distal and mid-depth levels in the lamina. This chain is Innexin shaking-B, found in Anopheles gambiae (African malaria mosquito).